The primary structure comprises 72 residues: Exodeoxyribonuclease 7 small subunit (72 aa).

It belongs to the XseB family. Heterooligomer composed of large and small subunits.

The protein localises to the cytoplasm. The enzyme catalyses Exonucleolytic cleavage in either 5'- to 3'- or 3'- to 5'-direction to yield nucleoside 5'-phosphates.. Functionally, bidirectionally degrades single-stranded DNA into large acid-insoluble oligonucleotides, which are then degraded further into small acid-soluble oligonucleotides. The chain is Exodeoxyribonuclease 7 small subunit from Chlamydia trachomatis serovar L2 (strain ATCC VR-902B / DSM 19102 / 434/Bu).